A 604-amino-acid polypeptide reads, in one-letter code: MLKQTIKKWNQSIERYESGNVGEALTILTSIEQSTSKINYNIGVMYIKSNNFRNAIEYFNRSVEQDKYLASSYYMRAIAHHMNGELNHAIVDYDETISKLRGHEYIDYKQLGLDHKLLLAEVLFNKALALGRAGSSVALQATQCFSQPSDSQEFKNQCKKIQDGSQLNFSTRPIPLSLLFKPPKVSDAPQKQRSATTSSIQSSSPSTPMSSSPPSYILKGPSSPPSSSSPSSSSPSLSSSSSPKLPPTPKPSFGSSPPPSSSSSSSSSSSSSSSSISPLTNKTLPPKPPPLPSKKLPSRPISCVIQDVKITLKVFYKDRRLIQIPVPCNLSTFIQKIELKFEITISDKFSLSFQLDGEENEINSQVQLDKMICMEINEINVKDIIPSPSPSPSPSPDKTNNSTSSYSSSSSSSSSSSSSSSSSSYDNKPKSSFIPKTTTRPILPPTTTTTTSTSNNFNRNATLPKKFGSTPSSPSFSSPSSSSSGGGGGPPIPTRGSPSISLLKQQNQTQSINIPPKVPTSSRPKMTQSHSPPSSSPLSSYSTSFQSVSSPSLSSSYNGSTSSYGGFSSSRPPPTPYPYQVLYTDSNEKYYLNTETNETFWELP.

TPR repeat units lie at residues 36–69 (SKIN…DKYL) and 71–103 (SSYY…LRGH). 2 disordered regions span residues 180–298 (FKPP…KLPS) and 383–581 (DIIP…PYQV). Composition is skewed to low complexity over residues 194–215 (SATT…SPPS) and 225–243 (PSSS…SSSP). Pro residues predominate over residues 244–260 (KLPPTPKPSFGSSPPPS). The segment covering 261–284 (SSSSSSSSSSSSSSSISPLTNKTL) has biased composition (low complexity). In terms of domain architecture, PB1 spans 309–384 (KITLKVFYKD…EINEINVKDI (76 aa)). 3 stretches are compositionally biased toward low complexity: residues 396 to 424 (PDKT…SSSS), 435 to 453 (PKTT…TTST), and 467 to 483 (FGST…SSSS). The segment covering 502–528 (LLKQQNQTQSINIPPKVPTSSRPKMTQ) has biased composition (polar residues). Residues 529–570 (SHSPPSSSPLSSYSTSFQSVSSPSLSSSYNGSTSSYGGFSSS) are compositionally biased toward low complexity. The WW domain maps to 573-604 (PPTPYPYQVLYTDSNEKYYLNTETNETFWELP).

Its function is as follows. May function as an activator of NOX1, a superoxide-producing NADPH oxidase. This chain is NADPH oxidase activator (ncfA), found in Dictyostelium discoideum (Social amoeba).